The primary structure comprises 361 residues: Chorismate synthase (361 aa).

Residues R48 and R54 each contribute to the NADP(+) site. Residues 125–127 (RSS), 238–239 (NA), G278, 293–297 (KPTSS), and R319 each bind FMN.

Belongs to the chorismate synthase family. As to quaternary structure, homotetramer. FMNH2 serves as cofactor.

It catalyses the reaction 5-O-(1-carboxyvinyl)-3-phosphoshikimate = chorismate + phosphate. It participates in metabolic intermediate biosynthesis; chorismate biosynthesis; chorismate from D-erythrose 4-phosphate and phosphoenolpyruvate: step 7/7. Its function is as follows. Catalyzes the anti-1,4-elimination of the C-3 phosphate and the C-6 proR hydrogen from 5-enolpyruvylshikimate-3-phosphate (EPSP) to yield chorismate, which is the branch point compound that serves as the starting substrate for the three terminal pathways of aromatic amino acid biosynthesis. This reaction introduces a second double bond into the aromatic ring system. The protein is Chorismate synthase of Yersinia pseudotuberculosis serotype O:1b (strain IP 31758).